Here is a 298-residue protein sequence, read N- to C-terminus: Cobalt-precorrin-5B C(1)-methyltransferase (298 aa).

This sequence belongs to the CbiD family.

It catalyses the reaction Co-precorrin-5B + S-adenosyl-L-methionine = Co-precorrin-6A + S-adenosyl-L-homocysteine. The protein operates within cofactor biosynthesis; adenosylcobalamin biosynthesis; cob(II)yrinate a,c-diamide from sirohydrochlorin (anaerobic route): step 6/10. Its function is as follows. Catalyzes the methylation of C-1 in cobalt-precorrin-5B to form cobalt-precorrin-6A. This chain is Cobalt-precorrin-5B C(1)-methyltransferase, found in Archaeoglobus fulgidus (strain ATCC 49558 / DSM 4304 / JCM 9628 / NBRC 100126 / VC-16).